The following is a 135-amino-acid chain: UPF0299 membrane protein Spro_1570 (135 aa).

4 helical membrane-spanning segments follow: residues 4–24 (LFTLCWKYLRAIVLIYLCLFA), 30–50 (ALLPIAIPGSIIGMLLLFALL), 63–83 (GCHLLIRYMVLLFVPIGVGVM), and 93–113 (LGPLVVSCIISTLMVLVVVGY).

It belongs to the UPF0299 family.

The protein localises to the cell inner membrane. The polypeptide is UPF0299 membrane protein Spro_1570 (Serratia proteamaculans (strain 568)).